The chain runs to 123 residues: Immunoglobulin lambda variable 5-45 (123 aa).

An N-terminal signal peptide occupies residues 1 to 19; it reads MAWTPLLLLFLSHCTGSLS. The framework-1 stretch occupies residues 20–44; sequence QAVLTQPSSLSASPGASASLTCTLC. The 104-residue stretch at 20–123 folds into the Ig-like domain; it reads QAVLTQPSSL…YCMIWHSSAS (104 aa). A disulfide bond links C41 and C115. Residues 45–53 form a complementarity-determining-1 region; the sequence is SGINVGTYR. The tract at residues 54–70 is framework-2; it reads IYWYQQKPGSPPQYLLR. Residues 68–92 are disordered; it reads LLRYKSDSDKQQGSGVPSRFSGSKD. The complementarity-determining-2 stretch occupies residues 71–77; it reads YKSDSDK. Residues 78-92 show a composition bias toward polar residues; that stretch reads QQGSGVPSRFSGSKD. The interval 78–115 is framework-3; it reads QQGSGVPSRFSGSKDASANAGILLISGLQSEDEADYYC. Positions 116 to 123 are complementarity-determining-3; that stretch reads MIWHSSAS.

Immunoglobulins are composed of two identical heavy chains and two identical light chains; disulfide-linked.

The protein resides in the secreted. It is found in the cell membrane. Functionally, v region of the variable domain of immunoglobulin light chains that participates in the antigen recognition. Immunoglobulins, also known as antibodies, are membrane-bound or secreted glycoproteins produced by B lymphocytes. In the recognition phase of humoral immunity, the membrane-bound immunoglobulins serve as receptors which, upon binding of a specific antigen, trigger the clonal expansion and differentiation of B lymphocytes into immunoglobulins-secreting plasma cells. Secreted immunoglobulins mediate the effector phase of humoral immunity, which results in the elimination of bound antigens. The antigen binding site is formed by the variable domain of one heavy chain, together with that of its associated light chain. Thus, each immunoglobulin has two antigen binding sites with remarkable affinity for a particular antigen. The variable domains are assembled by a process called V-(D)-J rearrangement and can then be subjected to somatic hypermutations which, after exposure to antigen and selection, allow affinity maturation for a particular antigen. This is Immunoglobulin lambda variable 5-45 from Homo sapiens (Human).